We begin with the raw amino-acid sequence, 114 residues long: Cell division protein FtsB (114 aa).

The Cytoplasmic segment spans residues 1 to 3 (MGK). A helical membrane pass occupies residues 4–21 (LTLLLVVLLGWLQYSLWV). Topologically, residues 22 to 114 (GKNGVHDYMR…ASYPSVTASH (93 aa)) are periplasmic. Residues 31–62 (RVKQDVATQQANNAKLKSRNDQLFAEIDDLNG) are a coiled coil.

The protein belongs to the FtsB family. Part of a complex composed of FtsB, FtsL and FtsQ.

It is found in the cell inner membrane. Essential cell division protein. May link together the upstream cell division proteins, which are predominantly cytoplasmic, with the downstream cell division proteins, which are predominantly periplasmic. This is Cell division protein FtsB from Edwardsiella ictaluri (strain 93-146).